The sequence spans 132 residues: Acyl carrier protein 3, chloroplastic (132 aa).

Residues 1–49 constitute a chloroplast transit peptide; the sequence is MASIAGSAVSFAKPVKAINTNSLSFSGARRGNAFLRLQPVPMRFAVCCS. A Carrier domain is found at 52-127; the sequence is QDTVEKVCEI…DAATLIDKLV (76 aa). Ser-87 is subject to O-(pantetheine 4'-phosphoryl)serine.

Belongs to the acyl carrier protein (ACP) family. Post-translationally, 4'-phosphopantetheine is transferred from CoA to a specific serine of apo-ACP by acpS. This modification is essential for activity because fatty acids are bound in thioester linkage to the sulfhydryl of the prosthetic group.

It is found in the plastid. The protein resides in the chloroplast. It functions in the pathway lipid metabolism; fatty acid biosynthesis. Functionally, carrier of the growing fatty acid chain in fatty acid biosynthesis. The sequence is that of Acyl carrier protein 3, chloroplastic (ACL1.3) from Hordeum vulgare (Barley).